The sequence spans 615 residues: uncharacterized protein (615 aa).

Residue serine 48 is modified to Phosphoserine. Residues 424 to 433 show a composition bias toward acidic residues; sequence DRENELEEGS. The interval 424-615 is disordered; sequence DRENELEEGS…YARKKTKKNV (192 aa). Composition is skewed to basic and acidic residues over residues 439 to 476, 484 to 496, 504 to 521, and 529 to 561; these read DNEREVREKETEIDKEVAQGDNEREVGEKETEIDKEVG, DGNKDMELNKEVA, ESEKDKEVTESEKDKEVA, and ESEKDIEVADSEKDKEVPQDDEMDGGKVTEPSK. 2 stretches are compositionally biased toward basic residues: residues 579-589 and 606-615; these read KKPKVVKKVAK and YARKKTKKNV.

This is an uncharacterized protein from Arabidopsis thaliana (Mouse-ear cress).